We begin with the raw amino-acid sequence, 469 residues long: Reticulon-2 (469 aa).

Disordered stretches follow at residues 1–180 (MGQV…EASE) and 201–238 (LTPQ…NGEG). The span at 14-25 (APSTASSTPDST) shows a compositional bias: low complexity. Basic and acidic residues predominate over residues 32–43 (SDFRELHTAREF). The residue at position 44 (Ser44) is a Phosphoserine. The span at 135-144 (RPLEELRLRL) shows a compositional bias: basic and acidic residues. Composition is skewed to polar residues over residues 159–168 (DSATSSSTPL) and 203–226 (PQLS…QDLN). The region spanning 270 to 469 (VADLLYWKDT…SVSGSKAKAE (200 aa)) is the Reticulon domain. 2 helical membrane-spanning segments follow: residues 293 to 313 (LLCL…LLGL) and 388 to 408 (LLFY…LVIL).

As to quaternary structure, interacts with SPAST. Interacts with BACE1. Interacts (via first transmembrane domain) with ARL6IP5/GTRAP3-18. Interacts (via N-terminus) with SLC1A1/EAAC1; the interaction promotes cell surface expression of SLC1A1. As to expression, expressed in brain and spinal cord (at protein level). In the embryonic brain cortex, expressed in neurons but not in astrocytes (at protein level).

The protein localises to the endoplasmic reticulum membrane. Its subcellular location is the sarcoplasmic reticulum membrane. It localises to the cell membrane. The protein resides in the sarcolemma. It is found in the T-tubule. The protein localises to the cytoplasm. Its subcellular location is the myofibril. It localises to the sarcomere. The protein resides in the z line. It is found in the cytoskeleton. In terms of biological role, inhibits amyloid precursor protein processing, probably by blocking BACE1 activity. Enhances trafficking of the glutamate transporter SLC1A1/EAAC1 from the endoplasmic reticulum to the cell surface. Plays a role in the translocation of SLC2A4/GLUT4 from intracellular membranes to the cell membrane which facilitates the uptake of glucose into the cell. This is Reticulon-2 from Rattus norvegicus (Rat).